The chain runs to 464 residues: GDNF family receptor alpha-2 (464 aa).

The signal sequence occupies residues 1-21 (MILANVFCLFFFLDETLRSLA). Cystine bridges form between Cys40–Cys93, Cys47–Cys53, Cys63–Cys78, Cys95–Cys105, Cys161–Cys222, Cys168–Cys174, Cys185–Cys200, Cys195–Cys241, Cys224–Cys229, Cys251–Cys323, Cys258–Cys264, Cys275–Cys293, Cys285–Cys347, and Cys325–Cys335. Residue Asn52 is glycosylated (N-linked (GlcNAc...) asparagine). Residues Asn357 and Asn413 are each glycosylated (N-linked (GlcNAc...) asparagine). The GPI-anchor amidated serine moiety is linked to residue Ser444. Residues 445-464 (RARPSAALTVLSVLMLKLAL) constitute a propeptide, removed in mature form.

Belongs to the GDNFR family. In terms of assembly, interacts with NRTN ligand and RET: forms a 2:2:2 ternary complex composed of NRTN ligand, GFRA2 and RET receptor. Also forms a 4:4:4 tetrameric complex composed of 4 copies of NRTN ligand, GFRA2 and RET receptor, which prevents endocytosis of RET. Interacts with SORL1.

It is found in the cell membrane. In terms of biological role, receptor for neurturin (NRTN), a growth factor that supports the survival of sympathetic neurons. NRTN-binding leads to autophosphorylation and activation of the RET receptor. Also able to mediate GDNF signaling through the RET tyrosine kinase receptor. This is GDNF family receptor alpha-2 (GFRA2) from Pongo abelii (Sumatran orangutan).